The primary structure comprises 101 residues: Urease subunit beta (101 aa).

Belongs to the urease beta subunit family. Heterotrimer of UreA (gamma), UreB (beta) and UreC (alpha) subunits. Three heterotrimers associate to form the active enzyme.

It localises to the cytoplasm. The catalysed reaction is urea + 2 H2O + H(+) = hydrogencarbonate + 2 NH4(+). It functions in the pathway nitrogen metabolism; urea degradation; CO(2) and NH(3) from urea (urease route): step 1/1. The polypeptide is Urease subunit beta (Ruegeria sp. (strain TM1040) (Silicibacter sp.)).